We begin with the raw amino-acid sequence, 256 residues long: 5-oxoprolinase subunit A (256 aa).

Belongs to the LamB/PxpA family. As to quaternary structure, forms a complex composed of PxpA, PxpB and PxpC.

It catalyses the reaction 5-oxo-L-proline + ATP + 2 H2O = L-glutamate + ADP + phosphate + H(+). In terms of biological role, catalyzes the cleavage of 5-oxoproline to form L-glutamate coupled to the hydrolysis of ATP to ADP and inorganic phosphate. This is 5-oxoprolinase subunit A from Alkaliphilus metalliredigens (strain QYMF).